The primary structure comprises 370 residues: Dual-specificity RNA methyltransferase RlmN (370 aa).

Residue Glu93 is the Proton acceptor of the active site. Residues 99-337 (EEGRGTLCVS…VTTVRKTRGD (239 aa)) enclose the Radical SAM core domain. Residues Cys106 and Cys343 are joined by a disulfide bond. 3 residues coordinate [4Fe-4S] cluster: Cys113, Cys117, and Cys120. Residues 167–168 (GE), Ser199, 221–223 (SLH), and Asn300 each bind S-adenosyl-L-methionine. The active-site S-methylcysteine intermediate is Cys343.

It belongs to the radical SAM superfamily. RlmN family. Requires [4Fe-4S] cluster as cofactor.

The protein resides in the cytoplasm. It catalyses the reaction adenosine(2503) in 23S rRNA + 2 reduced [2Fe-2S]-[ferredoxin] + 2 S-adenosyl-L-methionine = 2-methyladenosine(2503) in 23S rRNA + 5'-deoxyadenosine + L-methionine + 2 oxidized [2Fe-2S]-[ferredoxin] + S-adenosyl-L-homocysteine. It carries out the reaction adenosine(37) in tRNA + 2 reduced [2Fe-2S]-[ferredoxin] + 2 S-adenosyl-L-methionine = 2-methyladenosine(37) in tRNA + 5'-deoxyadenosine + L-methionine + 2 oxidized [2Fe-2S]-[ferredoxin] + S-adenosyl-L-homocysteine. In terms of biological role, specifically methylates position 2 of adenine 2503 in 23S rRNA and position 2 of adenine 37 in tRNAs. m2A2503 modification seems to play a crucial role in the proofreading step occurring at the peptidyl transferase center and thus would serve to optimize ribosomal fidelity. The protein is Dual-specificity RNA methyltransferase RlmN of Francisella tularensis subsp. novicida (strain U112).